Consider the following 387-residue polypeptide: 3-ketoacyl-CoA thiolase (387 aa).

Catalysis depends on Cys91, which acts as the Acyl-thioester intermediate. Residues His343 and Cys373 each act as proton acceptor in the active site.

It belongs to the thiolase-like superfamily. Thiolase family. In terms of assembly, heterotetramer of two alpha chains (FadB) and two beta chains (FadA).

The protein localises to the cytoplasm. It carries out the reaction an acyl-CoA + acetyl-CoA = a 3-oxoacyl-CoA + CoA. It functions in the pathway lipid metabolism; fatty acid beta-oxidation. Its function is as follows. Catalyzes the final step of fatty acid oxidation in which acetyl-CoA is released and the CoA ester of a fatty acid two carbons shorter is formed. The chain is 3-ketoacyl-CoA thiolase from Escherichia coli O1:K1 / APEC.